Consider the following 120-residue polypeptide: NAD(P)H-quinone oxidoreductase subunit 3, chloroplastic (120 aa).

The next 3 membrane-spanning stretches (helical) occupy residues 9 to 29, 64 to 84, and 88 to 108; these read IFWA…LISA, MFAL…PWAM, and VLGV…IVGL.

The protein belongs to the complex I subunit 3 family. NDH is composed of at least 16 different subunits, 5 of which are encoded in the nucleus.

The protein resides in the plastid. Its subcellular location is the chloroplast thylakoid membrane. The catalysed reaction is a plastoquinone + NADH + (n+1) H(+)(in) = a plastoquinol + NAD(+) + n H(+)(out). It carries out the reaction a plastoquinone + NADPH + (n+1) H(+)(in) = a plastoquinol + NADP(+) + n H(+)(out). In terms of biological role, NDH shuttles electrons from NAD(P)H:plastoquinone, via FMN and iron-sulfur (Fe-S) centers, to quinones in the photosynthetic chain and possibly in a chloroplast respiratory chain. The immediate electron acceptor for the enzyme in this species is believed to be plastoquinone. Couples the redox reaction to proton translocation, and thus conserves the redox energy in a proton gradient. This chain is NAD(P)H-quinone oxidoreductase subunit 3, chloroplastic, found in Citrus sinensis (Sweet orange).